The following is a 333-amino-acid chain: MPIRHCIVHLIEKKPDGTPAVLHARDSELAESQAIENMLADLNESYNAKQGKAWGLFHPESGAHPFSGWLKEYLDGGKDFTAFSRVSVEHLQKLMEESNLSVGGHVLFAHYQQGMTDYLAIALLHHSDGVAVNAELDVTPSRHLDLGQLHLAARINISEWQNNKQSKQYISFIKGKNGKKVSEYFRDFIGCQEGVDGPGETRTLLKAFSDFVESEDLPEESAREKTKTLIDYASSQSKMGEPMGLEALSELIDENQPRAFYDHIRNKDYGLSPEIPADKRTLNQFRRFTGRAEGLSISFEAHLLGDKIEYDETAGTLIIKGLPTQLTDQLKRR.

Belongs to the YejK family.

It is found in the cytoplasm. It localises to the nucleoid. The protein is Nucleoid-associated protein PSPTO_1265 of Pseudomonas syringae pv. tomato (strain ATCC BAA-871 / DC3000).